A 476-amino-acid polypeptide reads, in one-letter code: Aspartate kinase Ask_Ect (476 aa).

The ACT domain occupies 405–476 (SAIGSDLKVK…ENHGDVIAAA (72 aa)).

It belongs to the aspartokinase family. In terms of assembly, monomer.

Its subcellular location is the cytoplasm. The enzyme catalyses L-aspartate + ATP = 4-phospho-L-aspartate + ADP. It functions in the pathway amine and polyamine biosynthesis; ectoine biosynthesis. Allosterically and strongly feedback inhibited by tryptophan. The presence of either 650 mM NaCl or KCl reduces the inhibition by tryptophan. Involved in the biosynthesis of L-aspartate-beta-semialdehyde, which is an intermediate in the biosynthesis of ectoine, a highly soluble organic osmolyte, called compatible solute. Ectoine is used to avoid excessive water efflux, plasmolysis, molecular crowding of the cytoplasm, and cessation of growth in high salinity environments. Catalyzes the phosphorylation of the beta-carboxyl group of L-aspartate to yield 4-phospho-L-aspartate. The sequence is that of Aspartate kinase Ask_Ect (ask) from Stutzerimonas stutzeri (strain A1501) (Pseudomonas stutzeri).